We begin with the raw amino-acid sequence, 352 residues long: Thymidine kinase (352 aa).

26 to 33 contacts ATP; sequence GSMGIGKT. E54 serves as the catalytic Proton acceptor. Q95 is a substrate binding site. R185 contributes to the ATP binding site. Position 191 (R191) interacts with substrate.

The protein belongs to the herpesviridae thymidine kinase family. In terms of assembly, homodimer.

It catalyses the reaction thymidine + ATP = dTMP + ADP + H(+). Its function is as follows. Catalyzes the transfer of the gamma-phospho group of ATP to thymidine to generate dTMP in the salvage pathway of pyrimidine synthesis. The dTMP serves as a substrate for DNA polymerase during viral DNA replication. Allows the virus to be reactivated and to grow in non-proliferative cells lacking a high concentration of phosphorylated nucleic acid precursors. This Gallid herpesvirus 2 (strain Chicken/Md5/ATCC VR-987) (GaHV-2) protein is Thymidine kinase.